The chain runs to 327 residues: Phenylalanine--tRNA ligase alpha subunit (327 aa).

Glutamate 252 contributes to the Mg(2+) binding site.

It belongs to the class-II aminoacyl-tRNA synthetase family. Phe-tRNA synthetase alpha subunit type 1 subfamily. Tetramer of two alpha and two beta subunits. It depends on Mg(2+) as a cofactor.

It localises to the cytoplasm. It carries out the reaction tRNA(Phe) + L-phenylalanine + ATP = L-phenylalanyl-tRNA(Phe) + AMP + diphosphate + H(+). The chain is Phenylalanine--tRNA ligase alpha subunit from Shigella boydii serotype 18 (strain CDC 3083-94 / BS512).